Reading from the N-terminus, the 99-residue chain is NADH-ubiquinone oxidoreductase chain 4L (99 aa).

Transmembrane regions (helical) follow at residues 4–24 (MFLMFYLSMIMFLFGCMVFVS), 29–49 (LLSTLLSLEYMVLSLFIFLFF), and 63–83 (FFLTFCVCEGVLGLSILVSMI).

The protein belongs to the complex I subunit 4L family.

It localises to the mitochondrion membrane. The enzyme catalyses a ubiquinone + NADH + 5 H(+)(in) = a ubiquinol + NAD(+) + 4 H(+)(out). Functionally, core subunit of the mitochondrial membrane respiratory chain NADH dehydrogenase (Complex I) that is believed to belong to the minimal assembly required for catalysis. Complex I functions in the transfer of electrons from NADH to the respiratory chain. The immediate electron acceptor for the enzyme is believed to be ubiquinone. This chain is NADH-ubiquinone oxidoreductase chain 4L (mt:ND4L), found in Anopheles gambiae (African malaria mosquito).